The chain runs to 1048 residues: Selenate reductase subunit A (1048 aa).

The segment at residues 1-39 is a signal peptide (tat-type signal); that stretch reads MENQHQKFISRRNFIKTSALLGGTAFLGTGLPNIKKTYS. The 4Fe-4S Mo/W bis-MGD-type domain maps to 56-129; the sequence is ENILYSACLQ…AGIQHAYDPY (74 aa). Residues Cys63, Cys66, Cys70, and Cys115 each coordinate [4Fe-4S] cluster. Cys270 provides a ligand contact to Mo-bis(molybdopterin guanine dinucleotide).

This sequence belongs to the prokaryotic molybdopterin-containing oxidoreductase family. As to quaternary structure, the complex is composed of three subunits: SrdA, SrdB and SrdC. [4Fe-4S] cluster is required as a cofactor. Requires Mo-bis(molybdopterin guanine dinucleotide) as cofactor. Post-translationally, predicted to be exported by the Tat system. The position of the signal peptide cleavage has not been experimentally proven.

The protein resides in the secreted. It carries out the reaction selenite + a quinone + H2O = selenate + a quinol. In terms of biological role, component of the respiratory selenate reductase complex, which catalyzes the reduction of selenate to selenite. SrdA is probably the catalytic subunit that reduces selenate. This is Selenate reductase subunit A from Mesobacillus selenatarsenatis (strain DSM 18680 / JCM 14380 / FERM P-15431 / SF-1).